A 313-amino-acid chain; its full sequence is Serine/threonine-protein phosphatase CPPED1 (313 aa).

Ser2 is modified (phosphoserine). Positions Lys47 to Asn250 are catalytic. 4 residues coordinate a divalent metal cation: Asp53, Asp90, Asn127, and His246. A Phosphoserine modification is found at Ser293.

The protein belongs to the metallophosphoesterase superfamily. CPPED1 family. It depends on a divalent metal cation as a cofactor.

It localises to the cytoplasm. It catalyses the reaction O-phospho-L-seryl-[protein] + H2O = L-seryl-[protein] + phosphate. It carries out the reaction O-phospho-L-threonyl-[protein] + H2O = L-threonyl-[protein] + phosphate. Functionally, protein phosphatase that dephosphorylates AKT family kinase specifically at 'Ser-473', blocking cell cycle progression and promoting cell apoptosis. May play an inhibitory role in glucose uptake by adipocytes. The polypeptide is Serine/threonine-protein phosphatase CPPED1 (CPPED1) (Bos taurus (Bovine)).